The sequence spans 191 residues: Leucyl/phenylalanyl-tRNA--protein transferase (191 aa).

The protein belongs to the L/F-transferase family.

It localises to the cytoplasm. The enzyme catalyses N-terminal L-lysyl-[protein] + L-leucyl-tRNA(Leu) = N-terminal L-leucyl-L-lysyl-[protein] + tRNA(Leu) + H(+). It catalyses the reaction N-terminal L-arginyl-[protein] + L-leucyl-tRNA(Leu) = N-terminal L-leucyl-L-arginyl-[protein] + tRNA(Leu) + H(+). The catalysed reaction is L-phenylalanyl-tRNA(Phe) + an N-terminal L-alpha-aminoacyl-[protein] = an N-terminal L-phenylalanyl-L-alpha-aminoacyl-[protein] + tRNA(Phe). Functionally, functions in the N-end rule pathway of protein degradation where it conjugates Leu, Phe and, less efficiently, Met from aminoacyl-tRNAs to the N-termini of proteins containing an N-terminal arginine or lysine. The polypeptide is Leucyl/phenylalanyl-tRNA--protein transferase (Nostoc punctiforme (strain ATCC 29133 / PCC 73102)).